Reading from the N-terminus, the 154-residue chain is SsrA-binding protein (154 aa).

It belongs to the SmpB family.

It is found in the cytoplasm. In terms of biological role, required for rescue of stalled ribosomes mediated by trans-translation. Binds to transfer-messenger RNA (tmRNA), required for stable association of tmRNA with ribosomes. tmRNA and SmpB together mimic tRNA shape, replacing the anticodon stem-loop with SmpB. tmRNA is encoded by the ssrA gene; the 2 termini fold to resemble tRNA(Ala) and it encodes a 'tag peptide', a short internal open reading frame. During trans-translation Ala-aminoacylated tmRNA acts like a tRNA, entering the A-site of stalled ribosomes, displacing the stalled mRNA. The ribosome then switches to translate the ORF on the tmRNA; the nascent peptide is terminated with the 'tag peptide' encoded by the tmRNA and targeted for degradation. The ribosome is freed to recommence translation, which seems to be the essential function of trans-translation. This chain is SsrA-binding protein, found in Lachnoclostridium phytofermentans (strain ATCC 700394 / DSM 18823 / ISDg) (Clostridium phytofermentans).